We begin with the raw amino-acid sequence, 274 residues long: MQQLQNIIETAFERRAEITPANADTVTREAVNQVIALLDSGALRVAEKIDGQWVTHQWLKKAVLLSFRINDNQVIEGAESRYFDKVPMKFADYDEARFQKEGFRVVPPAAVRQGAFIARNTVLMPSYVNIGAYVDEGTMVDTWATVGSCAQIGKNVHLSGGVGIGGVLEPLQANPTIIEDNCFIGARSEVVEGVIVEEGSVISMGVYIGQSTRIYDRETGEIHYGRVPAGSVVVSGNLPSKDGKYSLYCAVIVKKVDAKTRGKVGINELLRTID.

Substrate-binding residues include R104 and D141.

The protein belongs to the transferase hexapeptide repeat family. As to quaternary structure, homotrimer.

The protein localises to the cytoplasm. It carries out the reaction (S)-2,3,4,5-tetrahydrodipicolinate + succinyl-CoA + H2O = (S)-2-succinylamino-6-oxoheptanedioate + CoA. It participates in amino-acid biosynthesis; L-lysine biosynthesis via DAP pathway; LL-2,6-diaminopimelate from (S)-tetrahydrodipicolinate (succinylase route): step 1/3. In Escherichia coli O139:H28 (strain E24377A / ETEC), this protein is 2,3,4,5-tetrahydropyridine-2,6-dicarboxylate N-succinyltransferase.